A 51-amino-acid polypeptide reads, in one-letter code: 2,3,4,5-tetrahydropyridine-2,6-dicarboxylate N-succinyltransferase (51 aa).

The protein belongs to the transferase hexapeptide repeat family. Homotrimer.

It is found in the cytoplasm. The catalysed reaction is (S)-2,3,4,5-tetrahydrodipicolinate + succinyl-CoA + H2O = (S)-2-succinylamino-6-oxoheptanedioate + CoA. It functions in the pathway amino-acid biosynthesis; L-lysine biosynthesis via DAP pathway; LL-2,6-diaminopimelate from (S)-tetrahydrodipicolinate (succinylase route): step 1/3. The protein is 2,3,4,5-tetrahydropyridine-2,6-dicarboxylate N-succinyltransferase (dapD) of Klebsiella oxytoca.